A 500-amino-acid chain; its full sequence is Protein farnesyltransferase subunit beta (500 aa).

The segment at 117–140 (LQNDDNNGNNNNRENNQNGGGFGG) is disordered. Over residues 119 to 133 (NDDNNGNNNNRENNQ) the composition is skewed to low complexity. PFTB repeat units lie at residues 121 to 162 (DNNG…YVIG), 172 to 213 (REAM…SMLN), 220 to 261 (ERGV…SILN), 268 to 309 (MNSL…IIIQ), and 343 to 384 (QEYV…SLSQ). (2E,6E)-farnesyl diphosphate contacts are provided by residues 246–249 (HGGY) and 288–291 (RTNK). Zn(2+) is bound by residues D294 and C296. 297–300 (YSYW) contributes to the (2E,6E)-farnesyl diphosphate binding site. H372 is a Zn(2+) binding site. The segment at 402–451 (FEQPSPPINKKSTNVFTISNNNNNNNNKNNNSDDNNNNSNNNNNNSENQL) is disordered. Positions 420-449 (SNNNNNNNNKNNNSDDNNNNSNNNNNNSEN) are enriched in low complexity.

The protein belongs to the protein prenyltransferase subunit beta family. As to quaternary structure, heterodimer of fntA and fntB (farnesyltransferase). Heterodimer of an alpha and a beta subunit. The cofactor is Zn(2+).

The catalysed reaction is L-cysteinyl-[protein] + (2E,6E)-farnesyl diphosphate = S-(2E,6E)-farnesyl-L-cysteinyl-[protein] + diphosphate. Catalyzes the transfer of a farnesyl moiety from farnesyl diphosphate to a cysteine at the fourth position from the C-terminus of several proteins. The beta subunit is responsible for peptide-binding. In Dictyostelium discoideum (Social amoeba), this protein is Protein farnesyltransferase subunit beta (fntB).